Consider the following 932-residue polypeptide: Protein translocase subunit SecA (932 aa).

ATP contacts are provided by residues glutamine 90, 108-112, and aspartate 498; that span reads GEGKT.

This sequence belongs to the SecA family. Monomer and homodimer. Part of the essential Sec protein translocation apparatus which comprises SecA, SecYEG and auxiliary proteins SecDF. Other proteins may also be involved.

The protein resides in the cell inner membrane. Its subcellular location is the cellular thylakoid membrane. It is found in the cytoplasm. The enzyme catalyses ATP + H2O + cellular proteinSide 1 = ADP + phosphate + cellular proteinSide 2.. Part of the Sec protein translocase complex. Interacts with the SecYEG preprotein conducting channel. Has a central role in coupling the hydrolysis of ATP to the transfer of proteins into and across the cell membrane, serving as an ATP-driven molecular motor driving the stepwise translocation of polypeptide chains across the membrane. Its function is as follows. Probably participates in protein translocation into and across both the cytoplasmic and thylakoid membranes in cyanobacterial cells. This Synechocystis sp. (strain ATCC 27184 / PCC 6803 / Kazusa) protein is Protein translocase subunit SecA.